The chain runs to 507 residues: Archaeal-type glutamate synthase [NADPH] (507 aa).

4Fe-4S ferredoxin-type domains follow at residues 10–39 (FVVE…YDEN) and 41–70 (NRVY…VRRN). [4Fe-4S] cluster-binding residues include Cys19, Cys22, Cys25, Cys29, Cys50, Cys53, Cys56, and Cys60.

Belongs to the glutamate synthase family. FMN is required as a cofactor.

It carries out the reaction 2 L-glutamate + NADP(+) = L-glutamine + 2-oxoglutarate + NADPH + H(+). This Thermotoga neapolitana (strain ATCC 49049 / DSM 4359 / NBRC 107923 / NS-E) protein is Archaeal-type glutamate synthase [NADPH].